A 220-amino-acid chain; its full sequence is Probable nicotinate-nucleotide adenylyltransferase (220 aa).

This sequence belongs to the NadD family.

The catalysed reaction is nicotinate beta-D-ribonucleotide + ATP + H(+) = deamido-NAD(+) + diphosphate. Its pathway is cofactor biosynthesis; NAD(+) biosynthesis; deamido-NAD(+) from nicotinate D-ribonucleotide: step 1/1. In terms of biological role, catalyzes the reversible adenylation of nicotinate mononucleotide (NaMN) to nicotinic acid adenine dinucleotide (NaAD). This chain is Probable nicotinate-nucleotide adenylyltransferase, found in Serratia proteamaculans (strain 568).